The chain runs to 168 residues: Endoribonuclease YbeY (168 aa).

His127, His131, and His137 together coordinate Zn(2+).

This sequence belongs to the endoribonuclease YbeY family. Requires Zn(2+) as cofactor.

It is found in the cytoplasm. In terms of biological role, single strand-specific metallo-endoribonuclease involved in late-stage 70S ribosome quality control and in maturation of the 3' terminus of the 16S rRNA. This Chromobacterium violaceum (strain ATCC 12472 / DSM 30191 / JCM 1249 / CCUG 213 / NBRC 12614 / NCIMB 9131 / NCTC 9757 / MK) protein is Endoribonuclease YbeY.